A 711-amino-acid chain; its full sequence is Polyribonucleotide nucleotidyltransferase (711 aa).

Asp486 and Asp492 together coordinate Mg(2+). The KH domain occupies 553–612; that stretch reads PRIHTIKINPDKIKDVIGKGGSVIRALTEETGTTIEIEDDGTVKIAATDGEKAKHAIRRI. An S1 motif domain is found at 622-690; that stretch reads GRVYTGKVTR…RQGRIRLSIK (69 aa). The segment at 689 to 711 is disordered; the sequence is IKEATEQSQPAAAPEAPAAEQGE. A compositionally biased stretch (low complexity) spans 694 to 711; it reads EQSQPAAAPEAPAAEQGE.

This sequence belongs to the polyribonucleotide nucleotidyltransferase family. Component of the RNA degradosome, which is a multiprotein complex involved in RNA processing and mRNA degradation. The cofactor is Mg(2+).

It localises to the cytoplasm. It catalyses the reaction RNA(n+1) + phosphate = RNA(n) + a ribonucleoside 5'-diphosphate. Involved in mRNA degradation. Catalyzes the phosphorolysis of single-stranded polyribonucleotides processively in the 3'- to 5'-direction. This Shigella boydii serotype 4 (strain Sb227) protein is Polyribonucleotide nucleotidyltransferase.